Consider the following 289-residue polypeptide: ATP synthase gamma chain (289 aa).

Belongs to the ATPase gamma chain family. F-type ATPases have 2 components, CF(1) - the catalytic core - and CF(0) - the membrane proton channel. CF(1) has five subunits: alpha(3), beta(3), gamma(1), delta(1), epsilon(1). CF(0) has three main subunits: a, b and c.

It is found in the cell inner membrane. Produces ATP from ADP in the presence of a proton gradient across the membrane. The gamma chain is believed to be important in regulating ATPase activity and the flow of protons through the CF(0) complex. In Dichelobacter nodosus (strain VCS1703A), this protein is ATP synthase gamma chain.